A 474-amino-acid chain; its full sequence is tRNA-2-methylthio-N(6)-dimethylallyladenosine synthase (474 aa).

An MTTase N-terminal domain is found at 3–120 (QKLHIKTWGC…LPEMINQIRG (118 aa)). [4Fe-4S] cluster is bound by residues C12, C49, C83, C157, C161, and C164. A Radical SAM core domain is found at 143–375 (KAEGPTAFVS…QQRINNQAAK (233 aa)). The 64-residue stretch at 378-441 (RAMLGTEQRV…TNSLRGDVIR (64 aa)) folds into the TRAM domain.

Belongs to the methylthiotransferase family. MiaB subfamily. Monomer. [4Fe-4S] cluster serves as cofactor.

It localises to the cytoplasm. The enzyme catalyses N(6)-dimethylallyladenosine(37) in tRNA + (sulfur carrier)-SH + AH2 + 2 S-adenosyl-L-methionine = 2-methylsulfanyl-N(6)-dimethylallyladenosine(37) in tRNA + (sulfur carrier)-H + 5'-deoxyadenosine + L-methionine + A + S-adenosyl-L-homocysteine + 2 H(+). Its function is as follows. Catalyzes the methylthiolation of N6-(dimethylallyl)adenosine (i(6)A), leading to the formation of 2-methylthio-N6-(dimethylallyl)adenosine (ms(2)i(6)A) at position 37 in tRNAs that read codons beginning with uridine. The polypeptide is tRNA-2-methylthio-N(6)-dimethylallyladenosine synthase (Actinobacillus succinogenes (strain ATCC 55618 / DSM 22257 / CCUG 43843 / 130Z)).